Consider the following 326-residue polypeptide: Meso-diaminopimelate D-dehydrogenase (326 aa).

Residues 11-14 (YGNL), 35-37 (TRR), 69-72 (CGGS), 92-94 (SFD), and 121-125 (VGWDP) contribute to the NADP(+) site. Substrate-binding positions include Asp94, Asp124, Trp148, 154 to 155 (QG), Thr173, Arg199, His249, and Asn276.

This sequence belongs to the diaminopimelate dehydrogenase family. As to quaternary structure, homodimer.

It catalyses the reaction meso-2,6-diaminopimelate + NADP(+) + H2O = (S)-2-amino-6-oxoheptanedioate + NH4(+) + NADPH + H(+). It functions in the pathway amino-acid biosynthesis; L-lysine biosynthesis via DAP pathway; DL-2,6-diaminopimelate from (S)-tetrahydrodipicolinate: step 1/1. Its activity is regulated as follows. L,L-2,6-diaminopimelate, D,D-2,6-diaminopimelate and meso-2,5-diaminoadipate competitively inhibit the oxidation of meso-2,6-diaminopimelate. L-2-amino-6-methylene-pimelate is also a potent competitive inhibitor (5 uM) of this reaction. Glyoxylate inhibits the reductive amination of L-2-amino-6-oxopimelate about 30%. The enzyme is inhibited completely by p-chloromercuribenzoate and HgCl(2) in vitro. In terms of biological role, catalyzes the reversible NADPH-dependent reductive amination of L-2-amino-6-oxopimelate, the acyclic form of L-tetrahydrodipicolinate, to generate the meso compound, D,L-2,6-diaminopimelate. Probably plays a role in lysine biosynthesis. Exhibits a high substrate specificity, since alpha-ketoglutarate, pyruvate, oxaloacetate, glyoxylate, alpha-ketobutyrate, alpha-ketovalerate, alpha-ketocaproate, alpha-ketoisocaproate, alpha-ketoisovalerate, and phenylpyruvate are not substrates for the reductive amination reaction, and L,L-2,6-diaminopimelate, D,D-2,6-diaminopimelate, DL-alpha-aminopimelate, meso- and DL-2,5-diaminoadipate, L-djenkolate, L-cystine, L-lysine, S-(beta-aminoethy1)-L-homocysteine, L-ornithine, L-arginine, L-alpha,gamma-diaminobutyrate, L-histidine, L-phenylalanine, L-tyrosine, L-glutamate, L-aspartate, L-leucine, L-valine, L-methionine, L-serine, L-alanine, L-alpha-aminobutyrate, D-lysine, D-glutamate, D-leucine, D-alanine, D-phenylalanine, epsilon-aminocaproate, 7-aminoheptanoate, and 8-aminooctanoate are not substrates for the oxidative deamination reaction. Cannot use NAD(+) or NAD(+) analogs instead of NADP(+) for the oxidative deamination reaction. This is Meso-diaminopimelate D-dehydrogenase (dapdh) from Lysinibacillus sphaericus (Bacillus sphaericus).